Reading from the N-terminus, the 302-residue chain is tRNA pseudouridine synthase B (302 aa).

Residue Asp-45 is the Nucleophile of the active site.

Belongs to the pseudouridine synthase TruB family. Type 1 subfamily.

It carries out the reaction uridine(55) in tRNA = pseudouridine(55) in tRNA. Its function is as follows. Responsible for synthesis of pseudouridine from uracil-55 in the psi GC loop of transfer RNAs. This Francisella tularensis subsp. tularensis (strain WY96-3418) protein is tRNA pseudouridine synthase B.